The chain runs to 286 residues: Bifunctional protein FolD 2 (286 aa).

Residues 165–167 (GRG), threonine 192, and isoleucine 233 each bind NADP(+).

The protein belongs to the tetrahydrofolate dehydrogenase/cyclohydrolase family. As to quaternary structure, homodimer.

The enzyme catalyses (6R)-5,10-methylene-5,6,7,8-tetrahydrofolate + NADP(+) = (6R)-5,10-methenyltetrahydrofolate + NADPH. It carries out the reaction (6R)-5,10-methenyltetrahydrofolate + H2O = (6R)-10-formyltetrahydrofolate + H(+). It participates in one-carbon metabolism; tetrahydrofolate interconversion. Catalyzes the oxidation of 5,10-methylenetetrahydrofolate to 5,10-methenyltetrahydrofolate and then the hydrolysis of 5,10-methenyltetrahydrofolate to 10-formyltetrahydrofolate. The protein is Bifunctional protein FolD 2 of Salinispora tropica (strain ATCC BAA-916 / DSM 44818 / JCM 13857 / NBRC 105044 / CNB-440).